The chain runs to 491 residues: MATQWEVVIGLETHAQLSTVSKIFSGASTQFGAEPNTQACPVDLALPGVLPVLNRGAVERAIRFGLAIGSTIAPRSIFARKNYFYPDLPKGYQISQYEIPVVQGGQITIQVPANEKAGKDAYEKTVNLTRAHLEEDAGKSLHEDFAGMTGIDLNRAGTPLLEIVTEPEMRSAAEAVAYAKALHGLVVWLGICDGNMQEGSFRCDANVSVRPIGQEKFGTRAEIKNLNSFRFLEEAINFEVRRQIELIEDGGEVVQETRLYDPDKRETRSMRSKEDAHDYRYFPDPDLMPLVIGQDWIERVQSGMPELPAAMQQRFADEYGVSAYDAGVLTSSKAMAAYFEAVVAKAGTANAKIAANWLMGDVSSQLNRDGIEIDAIPVSAAQLALVLQRIADGTISNKIAKEIFTTIWDEKADDEGAADRIIDAKGLKQISDTGALEAIIDEVLAANAKSVEEFRAGKEKAFNALIGQAMKATKGKANPQQVNELLKKKLG.

The protein belongs to the GatB/GatE family. GatB subfamily. In terms of assembly, heterotrimer of A, B and C subunits.

The catalysed reaction is L-glutamyl-tRNA(Gln) + L-glutamine + ATP + H2O = L-glutaminyl-tRNA(Gln) + L-glutamate + ADP + phosphate + H(+). It carries out the reaction L-aspartyl-tRNA(Asn) + L-glutamine + ATP + H2O = L-asparaginyl-tRNA(Asn) + L-glutamate + ADP + phosphate + 2 H(+). Its function is as follows. Allows the formation of correctly charged Asn-tRNA(Asn) or Gln-tRNA(Gln) through the transamidation of misacylated Asp-tRNA(Asn) or Glu-tRNA(Gln) in organisms which lack either or both of asparaginyl-tRNA or glutaminyl-tRNA synthetases. The reaction takes place in the presence of glutamine and ATP through an activated phospho-Asp-tRNA(Asn) or phospho-Glu-tRNA(Gln). This is Aspartyl/glutamyl-tRNA(Asn/Gln) amidotransferase subunit B from Burkholderia lata (strain ATCC 17760 / DSM 23089 / LMG 22485 / NCIMB 9086 / R18194 / 383).